Here is a 205-residue protein sequence, read N- to C-terminus: MAAALFVLLGFALLGTHGASGAAGTVFTTVEDLGSKILLTCSLNDSATEVTGHRWLKGGVVLKEDALPGQKTEFKVDSDDQWGEYSCVFLPEPMGTANIQLHGPPRVKAVKSSEHINEGETAMLVCKSESVPPVTDWAWYKITDSEDKALMNGSESRFFVSSSQGRSELHIENLNMEADPGQYRCNGTSSKGSDQAIITLRVRSH.

An N-terminal signal peptide occupies residues 1–18 (MAAALFVLLGFALLGTHG). The region spanning 19–103 (ASGAAGTVFT…MGTANIQLHG (85 aa)) is the Ig-like C2-type domain. The Extracellular segment spans residues 19–205 (ASGAAGTVFT…AIITLRVRSH (187 aa)). 2 disulfide bridges follow: Cys41–Cys87 and Cys126–Cys185. N-linked (GlcNAc...) asparagine glycans are attached at residues Asn44, Asn152, and Asn186. The region spanning 105–199 (PRVKAVKSSE…SKGSDQAIIT (95 aa)) is the Ig-like V-type domain.

As to quaternary structure, homooligomer. Interacts with VEGFA, KDR/VEGFR2, PPIA/CYPA, SLC16A12, SLC16A11, ATP1B2, MAG, L1CAM and AJAP1. Interacts with SLC16A1; interaction mediates SLC16A1 targeting to the plasma membrane. Interacts with SLC16A3; interaction mediates SLC16A3 targeting to the plasma membrane. Interacts with PPIL2; regulates BSG transport to the cell membrane. Interacts with XKR8; promoting its localization at the cell membrane. Interacts with SLC16A6; this interaction mediates targeting to the plasma membrane.

The protein localises to the cell membrane. It is found in the endoplasmic reticulum membrane. The protein resides in the basolateral cell membrane. Functionally, signaling receptor for cyclophilins, essential for PPIA/CYPA and PPIB/CYPB-dependent signaling related to chemotaxis and adhesion of immune cells. Plays an important role in targeting the monocarboxylate transporters SLC16A1/GLUT1, SLC16A3, SLC16A8, SLC16A11 and SLC16A12 to the plasma membrane. Acts as a coreceptor for vascular endothelial growth factor receptor 2 (KDR/VEGFR2) in endothelial cells enhancing its VEGFA-mediated activation and downstream signaling. Promotes angiogenesis through EPAS1/HIF2A-mediated up-regulation of VEGFA and KDR/VEGFR2 in endothelial cells. This is Basigin (BSG) from Bos taurus (Bovine).